Consider the following 547-residue polypeptide: Fimbria adhesin EcpD (547 aa).

The first 23 residues, 1-23 (MRVNLLIAMIIFALIWPVTALRA), serve as a signal peptide directing secretion.

It belongs to the EcpD/MatE family. In terms of assembly, forms polymers. Interacts with EcpA.

It is found in the fimbrium. Functionally, part of the ecpRABCDE operon, which encodes the E.coli common pilus (ECP). ECP is found in both commensal and pathogenic strains and plays a dual role in early-stage biofilm development and host cell recognition. Tip pilus adhesin, which is required for assembly of EcpA into fibers. This chain is Fimbria adhesin EcpD (ecpD), found in Escherichia coli O157:H7.